We begin with the raw amino-acid sequence, 546 residues long: Protein FAM124A (546 aa).

Disordered stretches follow at residues 1-37 (MDPKAGGGGEEDDCVDSGAETGGSDYSHLSSTSSELS), 286-360 (FPKP…FQRS), and 488-546 (SSSS…EFYI). Residues 24-36 (SDYSHLSSTSSEL) are compositionally biased toward low complexity. Basic residues predominate over residues 286–302 (FPKPGRVHHASEKKRHS). Polar residues-rich tracts occupy residues 304–324 (PLPSTAVPSHTPGSSQQSPLN) and 347–360 (ANSTPNPPWSFQRS). Positions 488 to 511 (SSSSATARAAPPAPSTSTLTDSSP) are enriched in low complexity.

It belongs to the FAM124 family.

The protein is Protein FAM124A (FAM124A) of Homo sapiens (Human).